An 899-amino-acid polypeptide reads, in one-letter code: Conserved oligomeric Golgi complex subunit 3 (899 aa).

The protein belongs to the COG3 family. As to quaternary structure, component of the conserved oligomeric Golgi complex which is composed of eight different subunits and is required for normal Golgi morphology and localization.

The protein resides in the golgi apparatus membrane. Functionally, involved in ER-Golgi transport. This Aedes aegypti (Yellowfever mosquito) protein is Conserved oligomeric Golgi complex subunit 3.